Here is a 500-residue protein sequence, read N- to C-terminus: Cytochrome P450 11B1, mitochondrial (500 aa).

The N-terminal 24 residues, M1–L24, are a transit peptide targeting the mitochondrion. C447 lines the heme pocket.

The protein belongs to the cytochrome P450 family. Heme serves as cofactor.

Its subcellular location is the mitochondrion inner membrane. The enzyme catalyses a steroid + 2 reduced [adrenodoxin] + O2 + 2 H(+) = an 11beta-hydroxysteroid + 2 oxidized [adrenodoxin] + H2O. The catalysed reaction is 11-deoxycortisol + 2 reduced [adrenodoxin] + O2 + 2 H(+) = cortisol + 2 oxidized [adrenodoxin] + H2O. It catalyses the reaction 21-hydroxyprogesterone + 2 reduced [adrenodoxin] + O2 + 2 H(+) = corticosterone + 2 oxidized [adrenodoxin] + H2O. It carries out the reaction 21-hydroxyprogesterone + 2 reduced [adrenodoxin] + O2 + 2 H(+) = 18-hydroxy-11-deoxycorticosterone + 2 oxidized [adrenodoxin] + H2O. The enzyme catalyses 21-hydroxyprogesterone + 2 reduced [adrenodoxin] + O2 + 2 H(+) = 19-hydroxy-11-deoxycorticosterone + 2 oxidized [adrenodoxin] + H2O. The catalysed reaction is cortisol + 2 reduced [adrenodoxin] + O2 + 2 H(+) = 18-hydroxycortisol + 2 oxidized [adrenodoxin] + H2O. It catalyses the reaction 11-deoxycortisol + 2 reduced [adrenodoxin] + O2 + 2 H(+) = 18-hydroxy-11-deoxycortisol + 2 oxidized [adrenodoxin] + H2O. It participates in steroid biosynthesis; glucocorticoid biosynthesis. Its pathway is steroid hormone biosynthesis. A cytochrome P450 monooxygenase involved in the biosynthesis of adrenal corticoids. Catalyzes a variety of reactions that are essential for many species, including detoxification, defense, and the formation of endogenous chemicals like steroid hormones. Steroid 11beta, 18- and 19-hydroxylase with preferred regioselectivity at 11beta, then 18, and lastly 19. Catalyzes the hydroxylation of 11-deoxycortisol and 11-deoxycorticosterone (21-hydroxyprogesterone) at 11beta position, yielding cortisol or corticosterone, respectively, but cannot produce aldosterone. Mechanistically, uses molecular oxygen inserting one oxygen atom into a substrate for hydroxylation and reducing the second into a water molecule. Two electrons are provided by NADPH via a two-protein mitochondrial transfer system comprising flavoprotein FDXR (adrenodoxin/ferredoxin reductase) and nonheme iron-sulfur protein FDX1 or FDX2 (adrenodoxin/ferredoxin). Due to its lack of 18-oxidation activity, it is incapable of generating aldosterone. Could also be involved in the androgen metabolic pathway. The sequence is that of Cytochrome P450 11B1, mitochondrial (CYP11B1) from Cavia porcellus (Guinea pig).